Here is a 453-residue protein sequence, read N- to C-terminus: Chromosomal replication initiator protein DnaA (453 aa).

The tract at residues 1-73 is domain I, interacts with DnaA modulators; it reads MSKEEIWDKV…ADLIEKAIGT (73 aa). Residues 73-114 form a domain II region; that stretch reads TKLMPNFVIQEDLTEDKQVKDSAKAKSEAKPDVQAPQNSSED. Residues 91–103 are compositionally biased toward basic and acidic residues; that stretch reads VKDSAKAKSEAKP. The disordered stretch occupies residues 91–113; the sequence is VKDSAKAKSEAKPDVQAPQNSSE. A domain III, AAA+ region region spans residues 115–331; sequence QFNVHNTFET…GALTRVIAYS (217 aa). Residues glycine 159, glycine 161, lysine 162, and threonine 163 each contribute to the ATP site. Residues 332-453 are domain IV, binds dsDNA; it reads RLQNEAITTE…ENLEKEIRNQ (122 aa).

It belongs to the DnaA family. As to quaternary structure, oligomerizes as a right-handed, spiral filament on DNA at oriC.

The protein localises to the cytoplasm. Functionally, plays an essential role in the initiation and regulation of chromosomal replication. ATP-DnaA binds to the origin of replication (oriC) to initiate formation of the DNA replication initiation complex once per cell cycle. Binds the DnaA box (a 9 base pair repeat at the origin) and separates the double-stranded (ds)DNA. Forms a right-handed helical filament on oriC DNA; dsDNA binds to the exterior of the filament while single-stranded (ss)DNA is stabiized in the filament's interior. The ATP-DnaA-oriC complex binds and stabilizes one strand of the AT-rich DNA unwinding element (DUE), permitting loading of DNA polymerase. After initiation quickly degrades to an ADP-DnaA complex that is not apt for DNA replication. Binds acidic phospholipids. This chain is Chromosomal replication initiator protein DnaA, found in Staphylococcus carnosus (strain TM300).